A 337-amino-acid polypeptide reads, in one-letter code: Putative tRNA (cytidine(32)/guanosine(34)-2'-O)-methyltransferase (337 aa).

The S-adenosyl-L-methionine site is built by G53, W55, D76, D92, and D117. Residue K157 is the Proton acceptor of the active site. Composition is skewed to basic and acidic residues over residues 304-318 (LKAE…KKTP) and 327-337 (ELEKAAEKFQL). A disordered region spans residues 304–337 (LKAELSRGKDQKKTPAENVPSVEELEKAAEKFQL).

It belongs to the class I-like SAM-binding methyltransferase superfamily. RNA methyltransferase RlmE family. TRM7 subfamily.

It localises to the cytoplasm. The catalysed reaction is cytidine(32)/guanosine(34) in tRNA + 2 S-adenosyl-L-methionine = 2'-O-methylcytidine(32)/2'-O-methylguanosine(34) in tRNA + 2 S-adenosyl-L-homocysteine + 2 H(+). Functionally, methylates the 2'-O-ribose of nucleotides at positions 32 and 34 of the tRNA anticodon loop of substrate tRNAs. This chain is Putative tRNA (cytidine(32)/guanosine(34)-2'-O)-methyltransferase, found in Caenorhabditis elegans.